Here is a 506-residue protein sequence, read N- to C-terminus: 5'-3' exonuclease PLD4 (506 aa).

Residues 31–51 (LQVLGALAVLWLGSVALICLL) form a helical membrane-spanning segment. Residues cysteine 94 and cysteine 250 are joined by a disulfide bond. 2 N-linked (GlcNAc...) asparagine glycosylation sites follow: asparagine 150 and asparagine 171. The PLD phosphodiesterase 1 domain occupies 209 to 236 (TRGVLHSKFWVVDGRHIYMGSANMDWRS). The Proton donor role is filled by histidine 214. Catalysis depends on residues lysine 216 and aspartate 221. N-linked (GlcNAc...) asparagine glycosylation is found at asparagine 249, asparagine 281, asparagine 403, asparagine 417, and asparagine 427. Cysteine 379 and cysteine 502 are joined by a disulfide. One can recognise a PLD phosphodiesterase 2 domain in the interval 423–449 (FSRVNHSKFMVTEKAAYIGTSNWSEDY). Catalysis depends on histidine 428, which acts as the Nucleophile. A glycan (N-linked (GlcNAc...) asparagine) is linked at asparagine 444.

It belongs to the phospholipase D family. Homodimer. Highly N-glycosylated. As to expression, expressed in plasmacytoid dendritic cells and monocytes (at protein level).

Its subcellular location is the endoplasmic reticulum membrane. It localises to the golgi apparatus. The protein localises to the trans-Golgi network membrane. It is found in the nucleus. The protein resides in the early endosome. Its subcellular location is the cytoplasmic vesicle. It localises to the phagosome. The protein localises to the lysosome. It carries out the reaction Exonucleolytic cleavage in the 5'- to 3'-direction to yield nucleoside 3'-phosphates.. The enzyme catalyses a 5'-end 5'-dephospho-ribonucleotidyl-ribonucleotide-RNA + H2O = a ribonucleoside 3'-phosphate + a 5'-end dephospho-ribonucleoside-RNA + H(+). The catalysed reaction is a ribonucleoside 3'-phosphate-2'-3'-cyclophospho-GMP + H2O = a ribonucleoside 3'-phosphate + 2',3'-cyclophospho-GMP + H(+). It catalyses the reaction a 5'-end 5'-dephospho-2'-deoxyribonucleotidyl-2'-deoxyribonucleotide in single-stranded DNA + H2O = a 5'-end dephospho-2'-deoxyribonucleoside in single-stranded DNA + a 2'-deoxyribonucleoside 3'-phosphate + H(+). It carries out the reaction a 5'-end 5'-phospho-2'-deoxyribonucleotide in single-stranded DNA + H2O = a 5'-end 5'-dephospho-2'-deoxyribonucleotide in single-stranded DNA + phosphate. The enzyme catalyses a 3-lyso-sn-glycero-1-phospho-(3'-acyl-1'-sn-glycerol) + a 1-acyl-sn-glycerol = a 3-acyl-sn-glycero-1-phospho-(3'-acyl-1'-sn-glycerol) + glycerol. The catalysed reaction is 3-lyso-sn-glycero-1-phospho-(3'-(9Z-octadecenoyl)-1'-sn-glycerol) + 1-(9Z-octadecenoyl)-sn-glycerol = 3-(9Z-octadecenoyl)-sn-glycero-1-phospho-(3'-(9Z-octadecenoyl)-1'-sn-glycerol) + glycerol. The exonuclease activity toward ssDNA substrate is Ca(2+) and Mg(2+)-independent, but it is inhibited by Fe(2+), Cu(2+) and to a lesser extent Zn(2+) ions. In terms of biological role, 5'-&gt;3' exonuclease that hydrolyzes the phosphodiester bond of single-stranded DNA (ssDNA) and RNA molecules to form nucleoside 3'-monophosphates and 5'-end 5'-hydroxy deoxyribonucleotide/ribonucleotide fragments. Partially redundant with PLD3, can cleave all four nucleotides displaying higher efficiency for ssDNA and RNA fragments initiated with uridine and guanosine residues and lower efficiency for cytidine-initiated substrates. As a result, it does not always degrade polynucleotides to the single nucleotide level, it can stall at specific sites sparing certain fragments from exonucleolytic degradation. Processes self and pathogenic ssDNA and RNA molecules that reach the endolysosomal compartment via phagocytosis or autophagy and may serve as 'danger' signals for recognition by innate immune receptors such as toll-like receptors (TLRs). Degrades mitochondrial CpG-rich ssDNA fragments to prevent TLR9 activation and autoinflammatory response, but it can cleave viral RNA to generate ligands for TLR7 activation and initiate antiviral immune responses. In plasmacytoid dendritic cells, it cooperates with endonuclease RNASET2 to release 2',3'-cyclic guanosine monophosphate (2',3'-cGMP), a potent stimulatory ligand for TLR7. Produces 2',3'-cGMPs and cytidine-rich RNA fragments that occupy TLR7 ligand-binding pockets and trigger a signaling-competent state. Can exert polynucleotide phosphatase activity toward 5'-phosphorylated ssDNA substrates although at a slow rate. Transphosphatidylase that catalyzes the exchange with R to S stereo-inversion of the glycerol moiety between (S,R)-lysophosphatidylglycerol (LPG) and monoacylglycerol (MAG) substrates to yield (S,S)-bis(monoacylglycero)phosphate (BMP). Can synthesize a variety of (S,S)-BMPs representing the main phospholipid constituent of lysosomal intralumenal vesicle (ILV) membranes that bind acid hydrolases for lipid degradation. Regulates the homeostasis and interorganellar communication of the endolysosomal system with an overall impact on cellular removal of dysfunctional organelles via autophagy as well as proper protein and lipid turnover. May play a role in myotube formation in response to ER stress. In Homo sapiens (Human), this protein is 5'-3' exonuclease PLD4.